The chain runs to 295 residues: 33 kDa chaperonin (295 aa).

2 disulfides stabilise this stretch: Cys-238-Cys-240 and Cys-271-Cys-274.

Belongs to the HSP33 family. Post-translationally, under oxidizing conditions two disulfide bonds are formed involving the reactive cysteines. Under reducing conditions zinc is bound to the reactive cysteines and the protein is inactive.

Its subcellular location is the cytoplasm. Its function is as follows. Redox regulated molecular chaperone. Protects both thermally unfolding and oxidatively damaged proteins from irreversible aggregation. Plays an important role in the bacterial defense system toward oxidative stress. The polypeptide is 33 kDa chaperonin (Clostridium botulinum (strain Eklund 17B / Type B)).